The primary structure comprises 348 residues: Dehydrogenase orsE (348 aa).

43–46 (LDTH) is a binding site for NADP(+). 130–137 (FAVEAAVC) is a binding site for substrate. Residues 180 to 183 (SSSV), 203 to 206 (GAHN), and 272 to 273 (VH) each bind NADP(+). Substrate is bound at residue 292–296 (NDIAT). 339–340 (VS) is a binding site for NADP(+).

It belongs to the zinc-containing alcohol dehydrogenase family. Monomer.

In terms of biological role, dehydrogenase; part of the gene cluster that mediates the biosynthesis of orsellinic acid, as well as of the cathepsin K inhibitors F9775 A and F9775 B. The non-reducing polyketide synthase orsA produces orsellinic acid by condensing acetyl-CoA with 3 malonyl-CoA units. Further modifications by the decarboxylase orsB and the tyrosinase-like protein orsC lead to the production of F9775 A and F9775 B. The functions of orsD and orsE remain unclear since only orsB and orsC are required to convert orsellinic acid into F9775 A and F9775 B. The polypeptide is Dehydrogenase orsE (Emericella nidulans (strain FGSC A4 / ATCC 38163 / CBS 112.46 / NRRL 194 / M139) (Aspergillus nidulans)).